The sequence spans 37 residues: uncharacterized protein (37 aa).

The helical transmembrane segment at 17 to 37 (TFVLIVVLFILLIIVGAAFIC) threads the bilayer.

The protein belongs to the SscA family.

The protein localises to the membrane. This is an uncharacterized protein from Bacillus subtilis (strain 168).